A 118-amino-acid chain; its full sequence is uncharacterized protein (118 aa).

3 helical membrane passes run isoleucine 6–valine 26, alanine 43–leucine 63, and isoleucine 84–glutamine 104.

Belongs to the AzlD/HI_1737/HP1330 family.

The protein resides in the cell membrane. This is an uncharacterized protein from Helicobacter pylori (strain J99 / ATCC 700824) (Campylobacter pylori J99).